We begin with the raw amino-acid sequence, 586 residues long: MSLSNKKTQKIASDLLPARLSQARGDGTLDLLITNVQMLDVITGDIYPTCIAIGGEHIVGVGMEYQTQSARRTWNALGAFVTPGFIDGHLHIESSMMSPFEFEKATLPLGTTTAICDPHEITNVLGGRGFSWFLRSSELMHQNLFVQMSSCVPALPGFETTGSDFPLEEMKSFKDHPSVLGLAEMMNFPGVIHADEEVLAKIEAFDDLNMDGHAPLLRGKALNAYLLAGIQNCHETVTLEEGREKLQKGMGLIIREGSVAKNLRTLAPLVNEFSSPQCLLCTDDRNPFEIAHEGHINYLIKELINKHGVAVHVAYRLATYSAARHFGLKRLGLVAPGKKADLVFLKDLKAVDIQEVMIGGKFVSELKLQDSLQEKLQTSQPPLENTMKRSPLTEKELTVNLLPGVYNVIEIVPHEIITQHLTVAFDGQKFAESDVLYMANIERYGKGLPPALGLVKGMGLKSGALASSVAHDSHNIMVIGTNPADMVLAVNTLIKSGGGFAVADQGEIKALVELPIAGLLSLKSAEEIKDGIADLKTAFRSLGVHLDEPFIQMAFLALPVIPTLKLTDRGLVNVTNFSFIPLQVEA.

It belongs to the metallo-dependent hydrolases superfamily. Adenine deaminase family. Mn(2+) is required as a cofactor.

The catalysed reaction is adenine + H2O + H(+) = hypoxanthine + NH4(+). In Bdellovibrio bacteriovorus (strain ATCC 15356 / DSM 50701 / NCIMB 9529 / HD100), this protein is Adenine deaminase.